The sequence spans 2514 residues: MDSVYVDIDADSAFLKALQQAYPMFEVEPKQVTPNDHANARAFSHLAIKLIEQEIDPDSTILDIGSAPARRMMSDRKYHCVCPMRSAEDPERLANYARKLASAAGKVTDKNISGKINDLQAVMAVPNMETSTFCLHTDATCKQRGDVAIYQDVYAVHAPTSLYHQAIKGVRVAYWIGFDTTPFMYNAMAGAYPSYSTNWADEQVLKAKNIGLCSTDLSEGRRGKLSIMRGKKLKPCDRVLFSVGSTLYPESRKLLQSWHLPSVFHLKGKLSFTCRCDTIVSCEGYVVKRVTMSPGIYGKTSGYAVTHHAGGFLMCKTTDTVDGERVSFSVCTYVPATICDQMTGILATEVTPEDAQKLLVGLNQRIVVNGRTQRNTNTMKNYLLPIVAQAFSKWAKECRKDMEDEKLLGVRERTLTCCCLWAFRKHKTHTVYKRPDTQSIQKVPAEFDSFVIPSLWSSGLSIPLRTRIKWLLSKAPKYEQLPHSGNAEEAAQAETDAVEEQEAELTREAMPPLQATQDDIQVEIDVEQLEDRAGAGIVETPRGAIKVTAQPSDLVVGEYLVLTPQAVLRSQKLSLIHALAEQVKTCTHSGRAGRYAVEAYDGRVLVPSGYAIPQEDFQSLSESATMVFNEREFVNRKLHHIAMHGPALNTDEESYELVRVEKTEHEYVYDVDQKKCCKREEATGLVLVGDLTSPPYHEFAYEGLKIRPACPYKTAVIGVFGVPGSGKSAIIKNLVTRQDLVTSGKKENCQEISNDVMRQRKLEISARTVDSLLLNGCNKPVEVLYVDEAFACHSGTLLALIAMVRPRQKVVLCGDPKQCGFFNMMQMKVNYNHNICTQVYHKSISRRCTLPVTAIVSSLHYESKMRTTNEYNQPIVVDTTGITKPEPGDLVLTCFRGWVKQLQIDYRGNEVMTAAASQGLTRKGVYAVRQKVNENPLYAPTSEHVNVLLTRTEGKLTWKTLSGDPWIKILQNPPKGDFKATIKEWEAEHASIMAGICNHQMAFDTFQNKANVCWAKCLVPILDTAGIKLSDRQWSQIVQAFKEDRAYSPEVALNEICTRIYGVDLDSGLFSKPLISVYYADNHWDNRPGGKMFGFNPEVALMLEKKYPFTKGKWNINKQICITTRKVDEFNPETNIIPANRRLPHSLVAEHHSVRGERMEWLVNKISGHHMLLVSGHNLILPTKRVTWVAPLGTRGADYTYNLELGLPATLGRYDLVVINIHTPFRIHHYQQCVDHAMKLQMLGGDSLRLLKPGGSLLIRAYGYADRTSERVISVLGRKFRSSRALKPQCITSNTEMFFLFSRFDNGRRNFTTHVMNNQLNAVYAGLATRAGCAPSYRVKRMDIAKNTEECVVNAANPRGVPGDGVCKAVYRKWPESFRNSATPVGTAKTIMCGQYPVIHAVGPNFSNYSEAEGDRELASVYREVAKEVSRLGVSSVAIPLLSTGVYSGGKDRLLQSLNHLFAAMDSTDADVVIYCRDKEWEKKITEAISLRSQVELLDDHISVDCDIVRVHPDSSLAGRKGYSTVEGALYSYLEGTRFHQTAVDMAEIYTMWPKQTEANEQVCLYALGESIESVRQKCPVDDADASFPPKTVPCLCRYAMTPERVARLRMNHTTSIIVCSSFPLPKYKIEGVQKVKCSKALLFDHNVPSRVSPRTYRPADEIIQTPQTPTEACQDAQLVQSINDEAVPVPSDLEACDATMDWPSIGTVSTRQRHDSSDSEYSGSRSNIQLVTADVHAPMYAHSLASSGGSMLSLSSEPAQNGTMILLDSEDTDSISRVSTPIAPPRRRLGRTINVTCDEREGKILPMASDRFFTAKPYTVALSVSTADMTVYPIQAPLGLIPPPTLEPITFGDFAEGEIDNLLTGALTFGDFEPGEVEELTDSEWSTCSDTDEELRLDRAGGYIFSSDTGQGHLQQKSVRQTTLPVNIVEEVHEEKCYPPKLDEIKEQLLLKRLQESASTANRSRYQSRKVENMKATIIHRLKEGCRLYLASETPRVPSYRVTYPAPIYSPSINIKLTNPETAVAVCNEFLARNYPTVASYQVTDEYDAYLDMVDGSESCLDRATFNPSKLRSYPKQHSYHAPTIRSAVPSPFQNTLQNVLAAATKRNCNVTQMRELPTMDSAVFNVECFKKYACNQEYWREFASSPIRVTTENLTMYVTKLKGPKAAALFAKTHNLLPLQEVPMDRFTMDMKRDVKVTPGTKHTEERPKVQVIQAAEPLATAYLCGIHRELVRRLNAVLLPNVHTLFDMSAEDFDAIIATHFKPGDAVLETDIASFDKSQDDSLASTAMMLLEDLGVDQPILDLIEAAFGEISSCHLPTGTRFKFGAMMKSGMFLTLFVNTLLNITIASRVLEERLTTSACAAFIGDDNIIHGVVSDALMAARCATWMNMEVKIIDAVVSEKAPYFCGGFILHDTVTGTSCRVADPLKRLFKLGKPLAAGDEQDEDRRRALADEVTRWQRTGLVTELEKAVYSRYEVQGITAVITSMATFANSKENFKKLRGPVVTLYGGPK.

The Alphavirus-like MT domain maps to 28–259 (EPKQVTPNDH…ESRKLLQSWH (232 aa)). The tract at residues 244-263 (GSTLYPESRKLLQSWHLPSV) is nsP1 membrane-binding. S-palmitoyl cysteine; by host attachment occurs at residues Cys417 and Cys419. In terms of domain architecture, (+)RNA virus helicase ATP-binding spans 690 to 842 (DLTSPPYHEF…HNICTQVYHK (153 aa)). 721-728 (GVPGSGKS) lines the a ribonucleoside 5'-triphosphate pocket. A (+)RNA virus helicase C-terminal domain is found at 843–991 (SISRRCTLPV…IKEWEAEHAS (149 aa)). The 324-residue stretch at 1004–1327 (DTFQNKANVC…NQLNAVYAGL (324 aa)) folds into the Peptidase C9 domain. Positions 1005 to 1024 (TFQNKANVCWAKCLVPILDT) are nucleolus localization signal. The active-site For cysteine protease nsP2 activity is Cys1013. The short motif at 1058 to 1067 (TRIYGVDLDS) is the Nuclear export signal element. His1083 serves as the catalytic For cysteine protease nsP2 activity. Residues 1182–1186 (PTKRV) carry the Nuclear localization signal motif. In terms of domain architecture, Macro spans 1334 to 1493 (APSYRVKRMD…KITEAISLRS (160 aa)). The ADP-D-ribose site is built by Asp1343, Asn1357, Gly1365, Gly1445, Val1446, and Tyr1447. Residues Cys1595, Cys1597, Cys1620, and Cys1638 each contribute to the Zn(2+) site. 2 short sequence motifs (FGDF; binding to host G3BP1) span residues 1852 to 1855 (FGDF) and 1870 to 1873 (FGDF). Residues 2268 to 2383 (DAVLETDIAS…HGVVSDALMA (116 aa)) form the RdRp catalytic domain.

In terms of assembly, interacts with non-structural protein 3. Interacts with RNA-directed RNA polymerase nsP4. Interacts with protease nsP2. interacts with itself. As to quaternary structure, interacts with mRNA-capping enzyme nsP1. Interacts with host DDX1. Interacts with host DDX3. Interacts (via C-terminus) with host G3BP1; this interaction inhibits the formation of host stress granules on viral mRNAs and the nsp3-G3BP1 complexes bind viral RNAs and probably orchestrate the assembly of viral replication complexes. Interacts (via C-terminus) with host G3BP2; this interaction inhibits the formation of host stress granules on viral mRNAs and the nsp3-G3BP2 complexes bind viral RNAs and probably orchestrate the assembly of viral replication complexes. Interacts with mRNA-capping enzyme nsP1. Interacts with protease nsP2. interacts with itself. In terms of assembly, interacts with RNA-directed RNA polymerase nsP4. Interacts with mRNA-capping enzyme nsP1. Interacts with KPNA1/karyopherin-alpha1; this interaction probably allows the active transport of protease nsP2 into the host nucleus. The cofactor is Mg(2+). It depends on Mn(2+) as a cofactor. In terms of processing, specific enzymatic cleavages in vivo yield mature proteins. The processing of the polyprotein is temporally regulated. In early stages (1.7 hpi), P1234 is first cleaved in trans through its nsP2 protease activity, releasing P123 and nsP4, which associate to form the early replication complex. At the same time, P1234 is also cut at the nsP1/nsP2 site early in infection but with lower efficiency. After replication of the viral minus-strand RNAs (4 hpi), the polyproteins are cut at the nsP1/nsP2 and nsP2/nsP3 sites very efficiently, preventing accumulation of P123 and P1234 and allowing the formation of the late replication complex. NsP3/nsP4 site is not cleaved anymore and P34 is produced rather than nsP4. Specific enzymatic cleavages in vivo yield mature proteins. The processing of the polyprotein is temporally regulated. In early stages (1.7 hpi), P123 is cleaved at the nsP1/nsP2 site with low efficiency. After replication of the viral minus-strand RNAs (4 hpi), the polyproteins are cut at the nsP1/nsP2 and nsP2/nsP3 sites very efficiently, preventing accumulation of P123 and allowing the formation of the late replication complex. Post-translationally, palmitoylated by host palmitoyltransferases ZDHHC2 and ZDHHC19. In terms of processing, phosphorylated by host on serines and threonines. Ubiquitinated; targets the protein for rapid degradation via the ubiquitin system. Nsp4 is present in extremely low quantities due to low frequency of translation through the amber stop-codon and the degradation by the ubiquitin pathway.

The protein resides in the host cytoplasmic vesicle membrane. Its subcellular location is the host cell membrane. It is found in the host cell projection. The protein localises to the host filopodium. It localises to the host nucleus. The protein resides in the host cytoplasm. It catalyses the reaction GTP + S-adenosyl-L-methionine = N(7)-methyl-GTP + S-adenosyl-L-homocysteine. The enzyme catalyses N(7)-methyl-GTP + L-histidyl-[protein] = N(tele)-(N(7)-methylguanosine 5'-phospho)-L-histidyl-[protein] + diphosphate. The catalysed reaction is N(tele)-(N(7)-methylguanosine 5'-phospho)-L-histidyl-[protein] + a 5'-end diphospho-(purine-ribonucleoside) in mRNA + H(+) = a 5'-end (N(7)-methyl 5'-triphosphoguanosine)-(purine-ribonucleoside) in mRNA + L-histidyl-[protein]. It carries out the reaction a 5'-end triphospho-ribonucleoside in mRNA + H2O = a 5'-end diphospho-ribonucleoside in mRNA + phosphate + H(+). It catalyses the reaction a ribonucleoside 5'-triphosphate + H2O = a ribonucleoside 5'-diphosphate + phosphate + H(+). The enzyme catalyses ATP + H2O = ADP + phosphate + H(+). The catalysed reaction is RNA(n) + a ribonucleoside 5'-triphosphate = RNA(n+1) + diphosphate. It carries out the reaction 4-O-(ADP-D-ribosyl)-L-aspartyl-[protein] + H2O = L-aspartyl-[protein] + ADP-D-ribose + H(+). It catalyses the reaction 5-O-(ADP-D-ribosyl)-L-glutamyl-[protein] + H2O = L-glutamyl-[protein] + ADP-D-ribose + H(+). The enzyme catalyses RNA(n) + ATP = RNA(n)-3'-adenine ribonucleotide + diphosphate. The catalysed reaction is ADP-alpha-D-ribose 1''-phosphate + H2O = ADP-D-ribose + phosphate. Functionally, inactive precursor of the viral replicase, which is activated by cleavages carried out by the viral protease nsP2. Its function is as follows. The early replication complex formed by the polyprotein P123 and nsP4 synthesizes minus-strand RNAs. As soon P123 is cleaved into mature proteins, the plus-strand RNAs synthesis begins. In terms of biological role, cytoplasmic capping enzyme that catalyzes two virus-specific reactions: methyltransferase and nsP1 guanylyltransferase. mRNA-capping is necessary since all viral RNAs are synthesized in the cytoplasm, and host capping enzymes are restricted to the nucleus. The enzymatic reaction involves a covalent link between 7-methyl-GMP and nsP1, whereas eukaryotic capping enzymes form a covalent complex only with GMP. nsP1 capping consists in the following reactions: GTP is first methylated into 7-methyl-GMP and then is covalently linked to nsP1 to form the m7GMp-nsP1 complex from which 7-methyl-GMP complex is transferred to the mRNA to create the cap structure. NsP1 is also needed for the initiation of the minus-strand RNAs synthesis. Probably serves as a membrane anchor for the replication complex composed of nsP1-nsP4. Palmitoylated nsP1 is remodeling host cell cytoskeleton, and induces filopodium-like structure formation at the surface of the host cell. Multifunctional protein whose N-terminus is part of the RNA polymerase complex and displays NTPase, RNA triphosphatase and helicase activities. NTPase and RNA triphosphatase are involved in viral RNA capping and helicase keeps a check on the dsRNA replication intermediates. The C-terminus harbors a protease that specifically cleaves the polyproteins and releases the mature proteins. Required for the shutoff of minus-strand RNAs synthesis. Specifically inhibits the host IFN response by promoting the nuclear export of host STAT1. Also inhibits host transcription by inducing the rapid proteasome-dependent degradation of POLR2A, a catalytic subunit of the RNAPII complex. The resulting inhibition of cellular protein synthesis serves to ensure maximal viral gene expression and to evade host immune response. Functionally, seems to be essential for minus-strand RNAs and subgenomic 26S mRNAs synthesis. Displays mono-ADP-ribosylhydrolase activity. ADP-ribosylation is a post-translational modification that controls various processes of the host cell and the virus probably needs to revert it for optimal viral replication. Binds proteins of G3BP family and sequesters them into the viral RNA replication complexes thereby inhibiting the formation of host stress granules on viral mRNAs. The nsp3-G3BP complexes bind viral RNAs and probably orchestrate the assembly of viral replication complexes, thanks to the ability of G3BP family members to self-assemble and bind DNA. Its function is as follows. RNA dependent RNA polymerase. Replicates genomic and antigenomic RNA by recognizing replications specific signals. The early replication complex formed by the polyprotein P123 and nsP4 synthesizes minus-strand RNAs. The late replication complex composed of fully processed nsP1-nsP4 is responsible for the production of genomic and subgenomic plus-strand RNAs. The polypeptide is Polyprotein P1234 (O'nyong-nyong virus (strain Gulu) (ONNV)).